The following is an 80-amino-acid chain: RNA-binding protein Hfq (80 aa).

The Sm domain occupies 7–67 (ESFLNTARKK…ITTIVPHERL (61 aa)).

It belongs to the Hfq family. Homohexamer.

Its function is as follows. RNA chaperone that binds small regulatory RNA (sRNAs) and mRNAs to facilitate mRNA translational regulation in response to envelope stress, environmental stress and changes in metabolite concentrations. Also binds with high specificity to tRNAs. In Aquifex aeolicus (strain VF5), this protein is RNA-binding protein Hfq.